The sequence spans 274 residues: MSDRVGRPRVIRAPRFFCSLRPPALYPERVSLPGPDPFITATRNTDTMPEQSASVSPALSQPPAQAQVTGRFLRMLSIILELLAAVREADERAEFGGLTARARVLEAETNALEREIEDACLVAFAAGLSERELAFYLMVFRSLANLERVGDYAFSVARDLETYAPRARSSTLQDLLPLIRLLSEMVERLAYAFAERDLTAARDVMRLDFEQVDALYEQMQRASLTRLIERPEDNEVALTAGRMARNLERLGDHLVNVAERLETLMLHDQRAGLL.

It belongs to the PhoU family.

This is an uncharacterized protein from Deinococcus radiodurans (strain ATCC 13939 / DSM 20539 / JCM 16871 / CCUG 27074 / LMG 4051 / NBRC 15346 / NCIMB 9279 / VKM B-1422 / R1).